The sequence spans 431 residues: Adenylosuccinate synthetase (431 aa).

Residues 13-19 (GDEGKGK) and 41-43 (GHT) each bind GTP. Aspartate 14 (proton acceptor) is an active-site residue. Residues aspartate 14 and glycine 41 each contribute to the Mg(2+) site. Residues 14-17 (DEGK), 39-42 (NAGH), threonine 130, arginine 144, glutamine 225, threonine 240, and arginine 304 contribute to the IMP site. The active-site Proton donor is the histidine 42. 300–306 (AVTGRPR) lines the substrate pocket. GTP contacts are provided by residues arginine 306, 332–334 (KLD), and 415–417 (STG).

This sequence belongs to the adenylosuccinate synthetase family. As to quaternary structure, homodimer. Mg(2+) serves as cofactor.

It is found in the cytoplasm. The enzyme catalyses IMP + L-aspartate + GTP = N(6)-(1,2-dicarboxyethyl)-AMP + GDP + phosphate + 2 H(+). It functions in the pathway purine metabolism; AMP biosynthesis via de novo pathway; AMP from IMP: step 1/2. Functionally, plays an important role in the de novo pathway of purine nucleotide biosynthesis. Catalyzes the first committed step in the biosynthesis of AMP from IMP. The sequence is that of Adenylosuccinate synthetase from Legionella pneumophila subsp. pneumophila (strain Philadelphia 1 / ATCC 33152 / DSM 7513).